The chain runs to 152 residues: Xanthine-guanine phosphoribosyltransferase (152 aa).

5-phospho-alpha-D-ribose 1-diphosphate is bound by residues 37-38 (RG), Arg69, and 88-96 (DDLVDTGGT). A GMP-binding site is contributed by Arg69. Position 89 (Asp89) interacts with Mg(2+). Positions 92 and 135 each coordinate guanine. Xanthine-binding residues include Asp92 and Ile135. GMP is bound by residues 92 to 96 (DTGGT) and 134 to 135 (WI).

Belongs to the purine/pyrimidine phosphoribosyltransferase family. XGPT subfamily. In terms of assembly, homotetramer. It depends on Mg(2+) as a cofactor.

It localises to the cell inner membrane. The enzyme catalyses GMP + diphosphate = guanine + 5-phospho-alpha-D-ribose 1-diphosphate. The catalysed reaction is XMP + diphosphate = xanthine + 5-phospho-alpha-D-ribose 1-diphosphate. It carries out the reaction IMP + diphosphate = hypoxanthine + 5-phospho-alpha-D-ribose 1-diphosphate. The protein operates within purine metabolism; GMP biosynthesis via salvage pathway; GMP from guanine: step 1/1. Its pathway is purine metabolism; XMP biosynthesis via salvage pathway; XMP from xanthine: step 1/1. Functionally, purine salvage pathway enzyme that catalyzes the transfer of the ribosyl-5-phosphate group from 5-phospho-alpha-D-ribose 1-diphosphate (PRPP) to the N9 position of the 6-oxopurines guanine and xanthine to form the corresponding ribonucleotides GMP (guanosine 5'-monophosphate) and XMP (xanthosine 5'-monophosphate), with the release of PPi. To a lesser extent, also acts on hypoxanthine. The sequence is that of Xanthine-guanine phosphoribosyltransferase from Citrobacter koseri (strain ATCC BAA-895 / CDC 4225-83 / SGSC4696).